The following is a 309-amino-acid chain: MNQENTQIVAAFYKFVSLPDFAEKQEPLLAYCLAQNIKGTILLAKEGINGTIAGSRLSIDNVLSYLRSDLRLQDLEHKESTADTPPFERMKVRLKKEIVTLGLPEVDPNEQVGAYVTPEEWNELISDPEVIVIDTRNDYEVHIGTFQGAQNPQTNSFRDFPEYVRQNLDPNQHKKVAMFCTGGIRCEKASSFMLSQGFAEVYHLKGGILKYLEQIPPEESLWQGECFVFDERIAVVHGLEPGTHELCFCCGHPLAEEDKASLQYEEGISCPHCFDSLTEDKRMRQQEKWRQYQLKNSHSLGNSKLGVAD.

Residues 126 to 220 enclose the Rhodanese domain; that stretch reads SDPEVIVIDT…YLEQIPPEES (95 aa). The active-site Cysteine persulfide intermediate is the Cys-180.

This sequence belongs to the TrhO family.

It catalyses the reaction uridine(34) in tRNA + AH2 + O2 = 5-hydroxyuridine(34) in tRNA + A + H2O. Functionally, catalyzes oxygen-dependent 5-hydroxyuridine (ho5U) modification at position 34 in tRNAs. The sequence is that of tRNA uridine(34) hydroxylase from Nostoc sp. (strain PCC 7120 / SAG 25.82 / UTEX 2576).